Consider the following 101-residue polypeptide: Alkene monooxygenase system, effector subunit (101 aa).

Belongs to the TmoD/XamoD family. Monomer. The alkene monooxygenase multicomponent enzyme system is composed of an electron transfer component and a monooxygenase component interacting with the effector protein XamoD. The electron transfer component is composed of a ferredoxin reductase (XamoF) and a ferredoxin (XamoC), and the monooxygenase component is formed by a heterohexamer (dimer of heterotrimers) of two alpha subunits (XamoA), two beta subunits (XamoE) and two gamma subunits (XamoB).

The protein localises to the cytoplasm. Effector component of the alkene monooxygenase multicomponent enzyme system which catalyzes the O2- and NADH-dependent epoxidation of short chain (C2 to C6) alkenes to their corresponding epoxides. One possible role of this small protein might be to facilitate electron transfer between the reductase and ferredoxin components. This is Alkene monooxygenase system, effector subunit from Xanthobacter autotrophicus (strain ATCC BAA-1158 / Py2).